We begin with the raw amino-acid sequence, 86 residues long: Putative membrane protein insertion efficiency factor (86 aa).

This sequence belongs to the UPF0161 family.

The protein localises to the cell membrane. Its function is as follows. Could be involved in insertion of integral membrane proteins into the membrane. The polypeptide is Putative membrane protein insertion efficiency factor (Streptococcus pyogenes serotype M1).